The chain runs to 207 residues: Large ribosomal subunit protein uL4 (207 aa).

The interval 49–73 (AKKRGEVSGGGKKPWKQKGGGRARA) is disordered.

Belongs to the universal ribosomal protein uL4 family. As to quaternary structure, part of the 50S ribosomal subunit.

One of the primary rRNA binding proteins, this protein initially binds near the 5'-end of the 23S rRNA. It is important during the early stages of 50S assembly. It makes multiple contacts with different domains of the 23S rRNA in the assembled 50S subunit and ribosome. In terms of biological role, forms part of the polypeptide exit tunnel. The protein is Large ribosomal subunit protein uL4 of Helicobacter hepaticus (strain ATCC 51449 / 3B1).